Reading from the N-terminus, the 1390-residue chain is DNA-directed RNA polymerase subunit beta (1390 aa).

Residues lysine 556–asparagine 576 form a disordered region.

This sequence belongs to the RNA polymerase beta chain family. The RNAP catalytic core consists of 2 alpha, 1 beta, 1 beta' and 1 omega subunit. When a sigma factor is associated with the core the holoenzyme is formed, which can initiate transcription.

The catalysed reaction is RNA(n) + a ribonucleoside 5'-triphosphate = RNA(n+1) + diphosphate. DNA-dependent RNA polymerase catalyzes the transcription of DNA into RNA using the four ribonucleoside triphosphates as substrates. This chain is DNA-directed RNA polymerase subunit beta, found in Mycoplasmoides gallisepticum (strain R(low / passage 15 / clone 2)) (Mycoplasma gallisepticum).